The chain runs to 216 residues: Adenylate kinase (216 aa).

10–15 (GAGKGT) contacts ATP. The NMP stretch occupies residues 30–59 (STGDMIRETIKSDSEIGKELKKVLDAGQLV). AMP is bound by residues T31, R36, 57 to 59 (QLV), and Q92. The tract at residues 122–159 (GRRVHPASGRTYHTKFNPPKVEGKDDITGEDLITRTDD) is LID. Residues R123 and 132–133 (TY) each bind ATP. Residues R156 and R167 each coordinate AMP. Q202 lines the ATP pocket.

The protein belongs to the adenylate kinase family. In terms of assembly, monomer.

It localises to the cytoplasm. The enzyme catalyses AMP + ATP = 2 ADP. Its pathway is purine metabolism; AMP biosynthesis via salvage pathway; AMP from ADP: step 1/1. Functionally, catalyzes the reversible transfer of the terminal phosphate group between ATP and AMP. Plays an important role in cellular energy homeostasis and in adenine nucleotide metabolism. In Francisella philomiragia subsp. philomiragia (strain ATCC 25017 / CCUG 19701 / FSC 153 / O#319-036), this protein is Adenylate kinase.